The sequence spans 426 residues: Probable alpha-galactosidase B (426 aa).

The signal sequence occupies residues 1–13 (MSRSKTRQGKLPA). 2 disulfides stabilise this stretch: cysteine 24–cysteine 56 and cysteine 106–cysteine 136. The active-site Nucleophile is aspartate 134. Asparagine 141 and asparagine 159 each carry an N-linked (GlcNAc...) asparagine glycan. 204–208 (EWGQA) contacts substrate. Asparagine 215 carries N-linked (GlcNAc...) asparagine glycosylation. Catalysis depends on aspartate 226, which acts as the Proton donor. An N-linked (GlcNAc...) asparagine glycan is attached at asparagine 265.

This sequence belongs to the glycosyl hydrolase 27 family.

The protein resides in the secreted. It carries out the reaction Hydrolysis of terminal, non-reducing alpha-D-galactose residues in alpha-D-galactosides, including galactose oligosaccharides, galactomannans and galactolipids.. Its function is as follows. Hydrolyzes a variety of simple alpha-D-galactoside as well as more complex molecules such as oligosaccharides and polysaccharides. The chain is Probable alpha-galactosidase B (aglB) from Aspergillus fumigatus (strain CBS 144.89 / FGSC A1163 / CEA10) (Neosartorya fumigata).